We begin with the raw amino-acid sequence, 356 residues long: Histidinol-phosphate aminotransferase 2 (356 aa).

An N6-(pyridoxal phosphate)lysine modification is found at Lys214.

The protein belongs to the class-II pyridoxal-phosphate-dependent aminotransferase family. Histidinol-phosphate aminotransferase subfamily. As to quaternary structure, homodimer. The cofactor is pyridoxal 5'-phosphate.

The enzyme catalyses L-histidinol phosphate + 2-oxoglutarate = 3-(imidazol-4-yl)-2-oxopropyl phosphate + L-glutamate. It functions in the pathway amino-acid biosynthesis; L-histidine biosynthesis; L-histidine from 5-phospho-alpha-D-ribose 1-diphosphate: step 7/9. The protein is Histidinol-phosphate aminotransferase 2 of Dechloromonas aromatica (strain RCB).